The chain runs to 113 residues: Nucleoid-associated protein PMT_0025 (113 aa).

Belongs to the YbaB/EbfC family. Homodimer.

It is found in the cytoplasm. The protein localises to the nucleoid. Binds to DNA and alters its conformation. May be involved in regulation of gene expression, nucleoid organization and DNA protection. This is Nucleoid-associated protein PMT_0025 from Prochlorococcus marinus (strain MIT 9313).